Consider the following 140-residue polypeptide: Putative pre-16S rRNA nuclease (140 aa).

It belongs to the YqgF nuclease family.

The protein localises to the cytoplasm. In terms of biological role, could be a nuclease involved in processing of the 5'-end of pre-16S rRNA. In Vibrio cholerae serotype O1 (strain ATCC 39541 / Classical Ogawa 395 / O395), this protein is Putative pre-16S rRNA nuclease.